The primary structure comprises 182 residues: Nudix hydrolase 17, mitochondrial (182 aa).

A mitochondrion-targeting transit peptide spans 1-26; the sequence is MGVEKMVCLASRTGRQFQRYNKGRRQ. Residues 27 to 158 enclose the Nudix hydrolase domain; that stretch reads VVGCVPYRFK…WMKEALDVLV (132 aa). Positions 65–86 match the Nudix box motif; it reads GGWELDESVEEAASRECLEEAG. The Mg(2+) site is built by E80 and E84.

It belongs to the Nudix hydrolase family. The cofactor is Mg(2+). Mn(2+) is required as a cofactor. Expressed in roots, leaves, stems and inflorescences.

The protein localises to the mitochondrion. Functionally, probably mediates the hydrolysis of some nucleoside diphosphate derivatives. The sequence is that of Nudix hydrolase 17, mitochondrial (NUDT17) from Arabidopsis thaliana (Mouse-ear cress).